A 495-amino-acid chain; its full sequence is Cardiolipin synthase A (495 aa).

2 helical membrane passes run 9 to 29 (IEVL…WLIT) and 46 to 66 (MAWL…YLLL). 2 consecutive PLD phosphodiesterase domains span residues 227 to 254 (MDLR…IDPK) and 408 to 435 (EGGL…DMRS). Residues H232, K234, D239, H413, K415, and D420 contribute to the active site.

It belongs to the phospholipase D family. Cardiolipin synthase subfamily. ClsA sub-subfamily.

The protein resides in the cell membrane. It carries out the reaction 2 a 1,2-diacyl-sn-glycero-3-phospho-(1'-sn-glycerol) = a cardiolipin + glycerol. Functionally, catalyzes the reversible phosphatidyl group transfer from one phosphatidylglycerol molecule to another to form cardiolipin (CL) (diphosphatidylglycerol) and glycerol. This Wigglesworthia glossinidia brevipalpis protein is Cardiolipin synthase A.